The following is a 524-amino-acid chain: Probable plastidic glucose transporter 1 (524 aa).

Transmembrane regions (helical) follow at residues 88–108, 122–142, 151–171, 179–199, 208–228, 239–259, 320–340, 357–377, 386–406, 420–440, 452–472, and 483–503; these read MANFLFGYHIGVMNGPIVSIA, LVVSIFIAGAFIGSIVAGPLV, FQIFTIPLILGALVSAQAHSL, FLVGLGIGVNTVLVPIYISEV, LGTLCQIGTCLGIIFSLLLGI, TMLYVASMPGFLLALGMQFAV, VAFIGGSLFVLQQFAGINGVL, QASLYVGVTNFAGALCASYLI, LIGSYLGMAVSMFLIVYAVGF, GTLMYIFSFAIGAGPVTGLII, IMGFSFSVHWVSNFLVGLFFL, and VYASFGSVSLLAAAFSHLFTV.

Belongs to the major facilitator superfamily. Sugar transporter (TC 2.A.1.1) family.

It is found in the plastid. The protein localises to the chloroplast membrane. May be involved in the efflux of glucose towards the cytosol. This Arabidopsis thaliana (Mouse-ear cress) protein is Probable plastidic glucose transporter 1.